We begin with the raw amino-acid sequence, 141 residues long: Ribonuclease VapC38 (141 aa).

Residues Asp5 and Asp102 each contribute to the Mg(2+) site.

The protein belongs to the PINc/VapC protein family. Mg(2+) is required as a cofactor.

The protein localises to the secreted. In terms of biological role, toxic component of a type II toxin-antitoxin (TA) system. An RNase. Its cognate antitoxin is VapB38. The polypeptide is Ribonuclease VapC38 (Mycobacterium tuberculosis (strain ATCC 25618 / H37Rv)).